The chain runs to 351 residues: Probable dual-specificity RNA methyltransferase RlmN (351 aa).

Glu92 acts as the Proton acceptor in catalysis. The 235-residue stretch at 98–332 folds into the Radical SAM core domain; the sequence is TDQRLTVCIS…VSLRASRGLD (235 aa). Cys105 and Cys337 are joined by a disulfide. Residues Cys112, Cys116, and Cys119 each contribute to the [4Fe-4S] cluster site. S-adenosyl-L-methionine-binding positions include 159–160, Ser189, 218–220, and Asn294; these read GE and SLH. Cys337 acts as the S-methylcysteine intermediate in catalysis.

This sequence belongs to the radical SAM superfamily. RlmN family. Requires [4Fe-4S] cluster as cofactor.

It is found in the cytoplasm. The enzyme catalyses adenosine(2503) in 23S rRNA + 2 reduced [2Fe-2S]-[ferredoxin] + 2 S-adenosyl-L-methionine = 2-methyladenosine(2503) in 23S rRNA + 5'-deoxyadenosine + L-methionine + 2 oxidized [2Fe-2S]-[ferredoxin] + S-adenosyl-L-homocysteine. The catalysed reaction is adenosine(37) in tRNA + 2 reduced [2Fe-2S]-[ferredoxin] + 2 S-adenosyl-L-methionine = 2-methyladenosine(37) in tRNA + 5'-deoxyadenosine + L-methionine + 2 oxidized [2Fe-2S]-[ferredoxin] + S-adenosyl-L-homocysteine. In terms of biological role, specifically methylates position 2 of adenine 2503 in 23S rRNA and position 2 of adenine 37 in tRNAs. The protein is Probable dual-specificity RNA methyltransferase RlmN of Synechococcus sp. (strain CC9902).